A 190-amino-acid chain; its full sequence is Probable gluconokinase (190 aa).

Position 7–14 (G7–T14) interacts with ATP.

Belongs to the gluconokinase GntK/GntV family.

The catalysed reaction is D-gluconate + ATP = 6-phospho-D-gluconate + ADP + H(+). It participates in carbohydrate acid metabolism; D-gluconate degradation. This is Probable gluconokinase (idnk) from Xenopus tropicalis (Western clawed frog).